The following is a 354-amino-acid chain: Membrane progestin receptor beta (354 aa).

Residues 1 to 75 (MTTAILQRLS…FFSLFQKHNE (75 aa)) are Cytoplasmic-facing. A helical transmembrane segment spans residues 76–96 (VVNVWTHLLAALAVLLRFWAF). The Extracellular portion of the chain corresponds to 97-111 (VETEGLPWTSAHTLP). Residues 112–132 (LLLYVLSSITYLTFSLLAHLL) traverse the membrane as a helical segment. The Cytoplasmic portion of the chain corresponds to 133–174 (QSKSELSHYTFYFVDYVGVSVYQYGSALVHFFYASDQAWYER). The helical transmembrane segment at 175–195 (FWLFFLPAAAFCGWLSCTGCC) threads the bilayer. Over 196–213 (YAKYRYRRPYPVMRKVCQ) the chain is Extracellular. Residues 214–234 (VVPAGLAFILDISPVAHRVAL) traverse the membrane as a helical segment. The Cytoplasmic portion of the chain corresponds to 235-243 (CHLSGCQEQ). The helical transmembrane segment at 244 to 264 (AAWYHTLQIVFFLVSAYFFSC) threads the bilayer. At 265–283 (PVPEKYFPGSCDIVGHGHQ) the chain is on the extracellular side. Residues 284–304 (IFHAFLSICTLSQLEAILLDY) form a helical membrane-spanning segment. Topologically, residues 305–319 (KGRQEIFLHRHSPLS) are cytoplasmic. Residues 320 to 340 (IYAACLSFFFLVACSGATAAL) form a helical membrane-spanning segment. Residues 341-354 (LREKIKARLSKKDS) lie on the Extracellular side of the membrane.

Belongs to the ADIPOR family.

The protein localises to the cell membrane. Steroid membrane receptor. Binds progesterone. May be involved in oocyte maturation. The protein is Membrane progestin receptor beta (PAQR8) of Sus scrofa (Pig).